The chain runs to 711 residues: DNA ligase (711 aa).

Residues 39–43, 88–89, and E119 contribute to the NAD(+) site; these read DAEYD and SL. K121 acts as the N6-AMP-lysine intermediate in catalysis. NAD(+) contacts are provided by R142, E179, K295, and K319. 4 residues coordinate Zn(2+): C416, C419, C434, and C440. In terms of domain architecture, BRCT spans 630–711; the sequence is ESVSSLAGRA…LRELLAGAGA (82 aa).

It belongs to the NAD-dependent DNA ligase family. LigA subfamily. Mg(2+) is required as a cofactor. Requires Mn(2+) as cofactor.

The enzyme catalyses NAD(+) + (deoxyribonucleotide)n-3'-hydroxyl + 5'-phospho-(deoxyribonucleotide)m = (deoxyribonucleotide)n+m + AMP + beta-nicotinamide D-nucleotide.. In terms of biological role, DNA ligase that catalyzes the formation of phosphodiester linkages between 5'-phosphoryl and 3'-hydroxyl groups in double-stranded DNA using NAD as a coenzyme and as the energy source for the reaction. It is essential for DNA replication and repair of damaged DNA. This Halorhodospira halophila (strain DSM 244 / SL1) (Ectothiorhodospira halophila (strain DSM 244 / SL1)) protein is DNA ligase.